The following is a 109-amino-acid chain: Nucleoid-associated protein ETA_24730 (109 aa).

The protein belongs to the YbaB/EbfC family. In terms of assembly, homodimer.

The protein localises to the cytoplasm. It localises to the nucleoid. In terms of biological role, binds to DNA and alters its conformation. May be involved in regulation of gene expression, nucleoid organization and DNA protection. The protein is Nucleoid-associated protein ETA_24730 of Erwinia tasmaniensis (strain DSM 17950 / CFBP 7177 / CIP 109463 / NCPPB 4357 / Et1/99).